The primary structure comprises 330 residues: Glycerol-3-phosphate dehydrogenase [NAD(P)+] (330 aa).

Positions 14, 15, 35, and 109 each coordinate NADPH. Sn-glycerol 3-phosphate contacts are provided by lysine 109 and glycine 137. Residue alanine 141 coordinates NADPH. Sn-glycerol 3-phosphate is bound by residues lysine 192, aspartate 248, serine 258, arginine 259, and asparagine 260. Lysine 192 (proton acceptor) is an active-site residue. Residue arginine 259 coordinates NADPH. NADPH-binding residues include leucine 283 and glutamate 285.

This sequence belongs to the NAD-dependent glycerol-3-phosphate dehydrogenase family.

It is found in the cytoplasm. It carries out the reaction sn-glycerol 3-phosphate + NAD(+) = dihydroxyacetone phosphate + NADH + H(+). It catalyses the reaction sn-glycerol 3-phosphate + NADP(+) = dihydroxyacetone phosphate + NADPH + H(+). Its pathway is membrane lipid metabolism; glycerophospholipid metabolism. Its function is as follows. Catalyzes the reduction of the glycolytic intermediate dihydroxyacetone phosphate (DHAP) to sn-glycerol 3-phosphate (G3P), the key precursor for phospholipid synthesis. The chain is Glycerol-3-phosphate dehydrogenase [NAD(P)+] from Rickettsia massiliae (strain Mtu5).